Consider the following 809-residue polypeptide: Zygotic DNA replication licensing factor mcm3 (809 aa).

An MCM domain is found at isoleucine 297–leucine 504. Glycine 347 to serine 354 contributes to the ATP binding site. The Arginine finger signature appears at serine 479–aspartate 482. Positions lysine 664–serine 741 are disordered. A compositionally biased stretch (basic and acidic residues) spans alanine 696–tyrosine 705.

The protein belongs to the MCM family. In terms of assembly, component of the mcm2-7 complex (RLF-M). The complex forms a toroidal hexameric ring with the proposed subunit order mcm2-mcm6-mcm4-mcm7-mcm3-mcm5. Component of the CMG helicase complex, composed of the mcm2-7 complex, the GINS complex and cdc45.

It is found in the nucleus. The protein localises to the chromosome. It catalyses the reaction ATP + H2O = ADP + phosphate + H(+). Its function is as follows. Acts as a component of the MCM2-7 complex (MCM complex) which is the putative replicative helicase essential for 'once per cell cycle' DNA replication initiation and elongation in eukaryotic cells. The active ATPase sites in the MCM2-7 ring are formed through the interaction surfaces of two neighboring subunits such that a critical structure of a conserved arginine finger motif is provided in trans relative to the ATP-binding site of the Walker A box of the adjacent subunit. The six ATPase active sites, however, are likely to contribute differentially to the complex helicase activity. The existence of maternal and zygotic forms of mcm3 and mcm6 suggests that specific forms of mcm2-7 complexes may be used during different stages of development. The sequence is that of Zygotic DNA replication licensing factor mcm3 (zmcm3) from Xenopus tropicalis (Western clawed frog).